The sequence spans 343 residues: Thromboxane A2 receptor (343 aa).

Residues 1-29 are Extracellular-facing; sequence MWPNASSLGPCFRPMNITLEERRLIASPW. 2 N-linked (GlcNAc...) asparagine glycosylation sites follow: Asn-4 and Asn-16. The helical transmembrane segment at 30–52 threads the bilayer; that stretch reads FAASFCLVGLASNLLALSVLMGA. Residues 53–66 are Cytoplasmic-facing; it reads RQGSSQSRSSFLTF. A helical transmembrane segment spans residues 67–87; it reads LCGLVLTDFMGLLVTGAIVVT. The Extracellular portion of the chain corresponds to 88-106; the sequence is QHFVLFEWQAVDPGCSLCH. A disulfide bond links Cys-105 and Cys-183. A helical transmembrane segment spans residues 107–128; sequence FMGVIMVFFGLCPLLLGAAMAS. Residues 129–149 lie on the Cytoplasmic side of the membrane; it reads ERFLGITRPFSRPATASQRRA. Residues 150 to 172 traverse the membrane as a helical segment; that stretch reads WTTVGLVWASALALGLLPLLGVG. Topologically, residues 173-193 are extracellular; that stretch reads HYTVQYPGSWCFLTLGTDPGD. A helical membrane pass occupies residues 194-219; it reads VAFGLLFALLGSISVGMSFLLNTISV. The Cytoplasmic segment spans residues 220 to 246; it reads ATLCHVYHGQATAQQRPRDCEVEMMVQ. Residues 247-270 form a helical membrane-spanning segment; the sequence is LMGIMVVASICWMPLLVFIAQTVL. Residues 271-289 are Extracellular-facing; that stretch reads QSPPAMSPTGQLSRLTERQ. Residues 290–311 form a helical membrane-spanning segment; sequence LLIYLRVATWNQILDPWVYILF. Over 312–343 the chain is Cytoplasmic; it reads RRAVIQRFYPRLSTRSRSLSLQPQLTRRSTIH. Residues Ser-329 and Ser-331 each carry the phosphoserine modification.

Belongs to the G-protein coupled receptor 1 family. In terms of assembly, interacts with RPGRIP1L. Interacts with RACK1; the interaction regulates TBXA2R cell surface expression.

It is found in the cell membrane. Functionally, receptor for thromboxane A2 (TXA2), a potent stimulator of platelet aggregation. The activity of this receptor is mediated by a G-protein that activates a phosphatidylinositol-calcium second messenger system. In the kidney, the binding of TXA2 to glomerular TP receptors causes intense vasoconstriction. Activates phospholipase C and adenylyl cyclase. The chain is Thromboxane A2 receptor (TBXA2R) from Bos taurus (Bovine).